Here is an 84-residue protein sequence, read N- to C-terminus: Chymotrypsin inhibitor Ani s 6 (84 aa).

Residues Met1–Lys22 form the signal peptide. Intrachain disulfides connect Cys25–Cys58, Cys34–Cys54, Cys38–Cys50, Cys42–Cys79, and Cys60–Cys73. A TIL domain is found at Cys25 to Cys79.

The protein belongs to the serine protease inhibitor-like (TIL domain-containing) family.

The protein resides in the secreted. Functionally, inhibits alpha-chymotrypsin, but not trypsin. The sequence is that of Chymotrypsin inhibitor Ani s 6 from Anisakis simplex (Herring worm).